The chain runs to 142 residues: Group IIE secretory phospholipase A2 (142 aa).

An N-terminal signal peptide occupies residues 1-19 (MKSPHVLVFLCLLVALVTG). 5 residues coordinate Ca(2+): Asp41, Gly43, Tyr45, Gly47, and Gly49. 7 disulfides stabilise this stretch: Cys44–Cys135, Cys46–Cys62, Cys61–Cys115, Cys67–Cys142, Cys68–Cys108, Cys77–Cys101, and Cys95–Cys106. Residue His65 is part of the active site. Asp66 is a binding site for Ca(2+). The active site involves Asp109. Residues Tyr130 and Asn132 each contribute to the Ca(2+) site.

Belongs to the phospholipase A2 family. Requires Ca(2+) as cofactor. In terms of tissue distribution, restricted to the brain, heart, lung, and placenta.

The protein resides in the secreted. Its subcellular location is the cytoplasm. It carries out the reaction a 1,2-diacyl-sn-glycero-3-phosphoethanolamine + H2O = a 1-acyl-sn-glycero-3-phosphoethanolamine + a fatty acid + H(+). It catalyses the reaction 1-hexadecanoyl-2-(9Z-octadecenoyl)-sn-glycero-3-phosphoethanolamine + H2O = 1-hexadecanoyl-sn-glycero-3-phosphoethanolamine + (9Z)-octadecenoate + H(+). The enzyme catalyses 1-hexadecanoyl-2-(9Z,12Z-octadecadienoyl)-sn-glycero-3-phosphoethanolamine + H2O = 1-hexadecanoyl-sn-glycero-3-phosphoethanolamine + (9Z,12Z)-octadecadienoate + H(+). The catalysed reaction is 1-hexadecanoyl-2-(5Z,8Z,11Z,14Z-eicosatetraenoyl)-sn-glycero-3-phosphoethanolamine + H2O = 1-hexadecanoyl-sn-glycero-3-phosphoethanolamine + (5Z,8Z,11Z,14Z)-eicosatetraenoate + H(+). It carries out the reaction 1,2-dihexadecanoyl-sn-glycero-3-phospho-(1'-sn-glycerol) + H2O = 1-hexadecanoyl-sn-glycero-3-phospho-(1'-sn-glycerol) + hexadecanoate + H(+). It catalyses the reaction 1-hexadecanoyl-2-(9Z-octadecenoyl)-sn-glycero-3-phosphoglycerol + H2O = 1-hexadecanoyl-sn-glycero-3-phosphoglycerol + (9Z)-octadecenoate + H(+). The enzyme catalyses a 1,2-diacyl-sn-glycero-3-phosphocholine + H2O = a 1-acyl-sn-glycero-3-phosphocholine + a fatty acid + H(+). The catalysed reaction is 1,2-dihexadecanoyl-sn-glycero-3-phosphocholine + H2O = 1-hexadecanoyl-sn-glycero-3-phosphocholine + hexadecanoate + H(+). It carries out the reaction 1-hexadecanoyl-2-(9Z-octadecenoyl)-sn-glycero-3-phosphocholine + H2O = 1-hexadecanoyl-sn-glycero-3-phosphocholine + (9Z)-octadecenoate + H(+). It catalyses the reaction 1-hexadecanoyl-2-(9Z,12Z-octadecadienoyl)-sn-glycero-3-phosphocholine + H2O = (9Z,12Z)-octadecadienoate + 1-hexadecanoyl-sn-glycero-3-phosphocholine + H(+). The enzyme catalyses 1-hexadecanoyl-2-(4Z,7Z,10Z,13Z,16Z,19Z-docosahexaenoyl)-sn-glycero-3-phosphocholine + H2O = (4Z,7Z,10Z,13Z,16Z,19Z)-docosahexaenoate + 1-hexadecanoyl-sn-glycero-3-phosphocholine + H(+). In terms of biological role, secretory calcium-dependent phospholipase A2 that primarily targets extracellular phospholipids. Hydrolyzes the ester bond of the fatty acyl group attached at sn-2 position of phospholipids (phospholipase A2 activity), releasing various unsaturated fatty acids including oleoate, linoleoate, arachidonate, docosahexaenoate and lysophosphatidylethanolamines in preference to lysophosphatidylcholines. In response to high-fat diet, hydrolyzes minor lipoprotein phospholipids including phosphatidylserines, phosphatidylinositols and phosphatidylglycerols, altering lipoprotein composition and fat storage in adipose tissue and liver. May act in an autocrine and paracrine manner. Contributes to lipid remodeling of cellular membranes and generation of lipid mediators involved in pathogen clearance. Cleaves sn-2 fatty acyl chains of phosphatidylglycerols and phosphatidylethanolamines, which are major components of membrane phospholipids in bacteria. Acts as a hair follicle phospholipase A2. Selectively releases lysophosphatidylethanolamines (LPE) and various unsaturated fatty acids in skin to regulate hair follicle homeostasis. May regulate the inflammatory response by releasing arachidonate, a precursor of prostaglandins and leukotrienes. Upon allergen exposure, may participate in allergic inflammatory response by enhancing leukotriene C4 synthesis and degranulation in mast cells. This is Group IIE secretory phospholipase A2 (PLA2G2E) from Homo sapiens (Human).